The following is a 427-amino-acid chain: Trigger factor (427 aa).

A PPIase FKBP-type domain is found at 163–248 (GDTVVIDFVG…IHEVKAKEVP (86 aa)).

The protein belongs to the FKBP-type PPIase family. Tig subfamily.

The protein localises to the cytoplasm. The catalysed reaction is [protein]-peptidylproline (omega=180) = [protein]-peptidylproline (omega=0). In terms of biological role, involved in protein export. Acts as a chaperone by maintaining the newly synthesized protein in an open conformation. Functions as a peptidyl-prolyl cis-trans isomerase. In Streptococcus pneumoniae (strain ATCC 700669 / Spain 23F-1), this protein is Trigger factor.